A 321-amino-acid chain; its full sequence is MSKPIQMERGVKYRDADKMALIPIKNMPTEQKEVLRKPEWMKIKLPADSQRIQDIKAAMRKNNLHSVCEEASCPNLAECFNHGTATFMILGAICTRRCPFCDVAHGRPNAPEAEEPKKLAQTIHDMKLKYVVITSVDRDDLRDGGAQHFADCNREIRALNPHIKIETLVPDFRGRMEVALEALKDNPPDVFNHNLETAPRLYRKVRPGANYKWSLELLRQFKEQHPHVPTKSGLMMGLGETKEEIVEVLKDLRAHGVTMLTLGQYLAPSRHHLPVERYVPPAEFDELKEIALELGFTHAACGPFVRSSYHADLQAKGLEVK.

Residues Cys68, Cys73, Cys79, Cys94, Cys98, Cys101, and Ser308 each coordinate [4Fe-4S] cluster. The Radical SAM core domain occupies 80–297 (FNHGTATFMI…KEIALELGFT (218 aa)).

The protein belongs to the radical SAM superfamily. Lipoyl synthase family. The cofactor is [4Fe-4S] cluster.

Its subcellular location is the cytoplasm. The catalysed reaction is [[Fe-S] cluster scaffold protein carrying a second [4Fe-4S](2+) cluster] + N(6)-octanoyl-L-lysyl-[protein] + 2 oxidized [2Fe-2S]-[ferredoxin] + 2 S-adenosyl-L-methionine + 4 H(+) = [[Fe-S] cluster scaffold protein] + N(6)-[(R)-dihydrolipoyl]-L-lysyl-[protein] + 4 Fe(3+) + 2 hydrogen sulfide + 2 5'-deoxyadenosine + 2 L-methionine + 2 reduced [2Fe-2S]-[ferredoxin]. It participates in protein modification; protein lipoylation via endogenous pathway; protein N(6)-(lipoyl)lysine from octanoyl-[acyl-carrier-protein]: step 2/2. In terms of biological role, catalyzes the radical-mediated insertion of two sulfur atoms into the C-6 and C-8 positions of the octanoyl moiety bound to the lipoyl domains of lipoate-dependent enzymes, thereby converting the octanoylated domains into lipoylated derivatives. The protein is Lipoyl synthase of Vibrio cholerae serotype O1 (strain ATCC 39541 / Classical Ogawa 395 / O395).